Consider the following 2194-residue polypeptide: PDZ and LIM domain protein Zasp (2194 aa).

The 83-residue stretch at 8-90 (QIKLSRFDAQ…NFVITVQRGG (83 aa)) folds into the PDZ domain. The tract at residues 211-277 (TGQSTPAFGN…KPPSTGGLPT (67 aa)) is disordered. Residues 228–253 (PQQLQQPQQQYNQHQQHYHQQQQQQQ) are compositionally biased toward low complexity. The region spanning 280-339 (NICTECERLITGVFVRIKDKNLHVECFKCATCGTSLKNQGYYNFNNKLYCDIHAKQAAIN) is the LIM zinc-binding 1 domain. The segment covering 415 to 435 (AATPQAATATDSPAATASSSD) has biased composition (low complexity). 11 disordered regions span residues 415 to 436 (AATP…SSDN), 457 to 476 (VALA…DQPF), 511 to 558 (GAAA…AVEE), 580 to 611 (SRQS…YIPP), 623 to 692 (VQQV…TTSE), 896 to 940 (AAAA…PRGS), 1223 to 1260 (LTQK…QRTQ), 1297 to 1322 (QSQS…PPAN), 1550 to 1632 (LNAS…QQPE), 1646 to 1738 (QREQ…YGKT), and 1815 to 1837 (APPP…SGYQ). The segment covering 515–530 (PKSPVSYPPQQQQQSP) has biased composition (low complexity). Polar residues-rich tracts occupy residues 580–590 (SRQSQRGSSFT) and 644–667 (VGTS…TASA). The segment covering 676–692 (SSDSYTSTSTTTTTTSE) has biased composition (low complexity). The segment covering 1598 to 1610 (QTGSITTGQSYQG) has biased composition (polar residues). Composition is skewed to low complexity over residues 1616-1630 (SEQS…YNQQ), 1646-1668 (QREQ…TRSQ), and 1699-1727 (SQSV…QNQS). 3 LIM zinc-binding domains span residues 2018–2078 (PLCN…KYLA), 2079–2138 (PTCS…LFTT), and 2139–2194 (KCFA…NHAR).

Interacts with alpha-actinin (Actn). In terms of tissue distribution, expression is first detected in the proctodeum and the midgut primordium. In stage 11 embryos, expression is predominant in the leading edge of epidermal cells adjacent to the amnioserosa. Stage 12 embryos exhibit expression in the midgut and the leading edge. Expressed in several rows of germ band cells next to the leading edge at stage 14. Strong expression is visible in the midgut and pharyngeal muscles of stage 17 embryos. Also expressed in somatic muscles and visceral mesoderm. Colocalizes with mys (beta PS integrin) in myotendinous junctions and with Actn in muscle Z lines.

It localises to the cytoplasm. Its subcellular location is the cytoskeleton. In terms of biological role, regulator of cell matrix adhesion having two related functions, one upstream of Actn organizing the Z line and the other downstream of integrins regulating assembly of integrin adhesion sites. Also required for the formation of myotendinous junctions in muscles. The polypeptide is PDZ and LIM domain protein Zasp (Zasp52) (Drosophila melanogaster (Fruit fly)).